We begin with the raw amino-acid sequence, 258 residues long: Leucyl/phenylalanyl-tRNA--protein transferase (258 aa).

It belongs to the L/F-transferase family.

The protein resides in the cytoplasm. It catalyses the reaction N-terminal L-lysyl-[protein] + L-leucyl-tRNA(Leu) = N-terminal L-leucyl-L-lysyl-[protein] + tRNA(Leu) + H(+). It carries out the reaction N-terminal L-arginyl-[protein] + L-leucyl-tRNA(Leu) = N-terminal L-leucyl-L-arginyl-[protein] + tRNA(Leu) + H(+). The enzyme catalyses L-phenylalanyl-tRNA(Phe) + an N-terminal L-alpha-aminoacyl-[protein] = an N-terminal L-phenylalanyl-L-alpha-aminoacyl-[protein] + tRNA(Phe). Functionally, functions in the N-end rule pathway of protein degradation where it conjugates Leu, Phe and, less efficiently, Met from aminoacyl-tRNAs to the N-termini of proteins containing an N-terminal arginine or lysine. In Alkalilimnicola ehrlichii (strain ATCC BAA-1101 / DSM 17681 / MLHE-1), this protein is Leucyl/phenylalanyl-tRNA--protein transferase.